Here is a 32-residue protein sequence, read N- to C-terminus: U21-ctenitoxin-Co1a (32 aa).

Disulfide bonds link C3/C17, C10/C21, and C16/C30.

In terms of tissue distribution, expressed by the venom gland.

Its subcellular location is the secreted. Functionally, not toxic to mice by intracerebroventricular injection. This is U21-ctenitoxin-Co1a from Ctenus ornatus (Brazilian spider).